The primary structure comprises 390 residues: Chorismate synthase (390 aa).

Arginine 39 and arginine 45 together coordinate NADP(+). FMN-binding positions include 132 to 134 (RSS), 253 to 254 (NA), glycine 298, 313 to 317 (KPIPT), and arginine 339.

This sequence belongs to the chorismate synthase family. Homotetramer. The cofactor is FMNH2.

The catalysed reaction is 5-O-(1-carboxyvinyl)-3-phosphoshikimate = chorismate + phosphate. Its pathway is metabolic intermediate biosynthesis; chorismate biosynthesis; chorismate from D-erythrose 4-phosphate and phosphoenolpyruvate: step 7/7. Its function is as follows. Catalyzes the anti-1,4-elimination of the C-3 phosphate and the C-6 proR hydrogen from 5-enolpyruvylshikimate-3-phosphate (EPSP) to yield chorismate, which is the branch point compound that serves as the starting substrate for the three terminal pathways of aromatic amino acid biosynthesis. This reaction introduces a second double bond into the aromatic ring system. This chain is Chorismate synthase, found in Shouchella clausii (strain KSM-K16) (Alkalihalobacillus clausii).